Here is a 258-residue protein sequence, read N- to C-terminus: Ciliogenesis and planar polarity effector 2 (258 aa).

The interval 50 to 258 is small GTPase-like; the sequence is SIDTASYKIF…LPNPPESAPE (209 aa). The GTP site is built by S64, G65, G67, K68, T69, A70, V82, H84, T87, K176, D178, and S206.

Belongs to the small GTPase superfamily. Rab family. As to quaternary structure, interacts with FUZ. Associates with the CPLANE (ciliogenesis and planar polarity effectors) complex via its interaction with FUZ.

Its subcellular location is the cytoplasm. It localises to the cytoskeleton. The protein localises to the cilium basal body. It is found in the microtubule organizing center. The protein resides in the centrosome. Its subcellular location is the centriole. In terms of biological role, required for efficient primary cilia initiation, regulating a late step in cilia initiation. Plays a role in the final maturation of the mother centriole and ciliary vesicle that allows extension of the ciliary axoneme. The chain is Ciliogenesis and planar polarity effector 2 from Homo sapiens (Human).